We begin with the raw amino-acid sequence, 180 residues long: NAD(P)H-quinone oxidoreductase subunit I, chloroplastic (180 aa).

4Fe-4S ferredoxin-type domains lie at 55–84 (GRIH…VDWR) and 95–124 (LNYS…MTEE). The [4Fe-4S] cluster site is built by Cys64, Cys67, Cys70, Cys74, Cys104, Cys107, Cys110, and Cys114.

Belongs to the complex I 23 kDa subunit family. NDH is composed of at least 16 different subunits, 5 of which are encoded in the nucleus. The cofactor is [4Fe-4S] cluster.

It localises to the plastid. It is found in the chloroplast thylakoid membrane. The enzyme catalyses a plastoquinone + NADH + (n+1) H(+)(in) = a plastoquinol + NAD(+) + n H(+)(out). The catalysed reaction is a plastoquinone + NADPH + (n+1) H(+)(in) = a plastoquinol + NADP(+) + n H(+)(out). Its function is as follows. NDH shuttles electrons from NAD(P)H:plastoquinone, via FMN and iron-sulfur (Fe-S) centers, to quinones in the photosynthetic chain and possibly in a chloroplast respiratory chain. The immediate electron acceptor for the enzyme in this species is believed to be plastoquinone. Couples the redox reaction to proton translocation, and thus conserves the redox energy in a proton gradient. The sequence is that of NAD(P)H-quinone oxidoreductase subunit I, chloroplastic from Hordeum vulgare (Barley).